Consider the following 118-residue polypeptide: Holin-like protein CidA 2 (118 aa).

4 helical membrane passes run 5–27 (MLLL…QGVF), 31–50 (MPGS…TRIL), 62–84 (LLVF…ESFL), and 88–110 (GSII…GYIS).

This sequence belongs to the CidA/LrgA family. CidA subfamily.

The protein localises to the cell membrane. Its function is as follows. Increases the activity of extracellular murein hydrolases possibly by mediating their export via hole formation. Inhibited by the antiholin-like proteins LrgAB. In an unstressed cell, the LrgAB products probably inhibit the function of the CidA protein. When a cell is stressed by the addition of antibiotics or by other factors in the environment, CidA possibly oligomerizes within the bacterial cell membrane, creating lesions that disrupt the proton motive force, which in turn results in loss of cell viability. These lesions are also hypothesized to regulate the subsequent cell lysis by either allowing the murein hydrolases access to the cell wall substrate and/or regulating their activity by a possible change in the cell wall pH that results from loss of membrane potential. This Bacillus anthracis protein is Holin-like protein CidA 2 (cidA2).